Here is a 396-residue protein sequence, read N- to C-terminus: Protein BOP3 (396 aa).

6 disordered regions span residues 1 to 22 (MSTFNSYSQPKESNDNSHNNVN), 98 to 126 (GVPASSPMKAGGNQPHNNTEGTQSSENLP), 145 to 168 (PTPMSRQPSPYKFPASSSTGGISH), 203 to 239 (VARRIPSGTKSQESPLNKKPTSLHSRNLSLPIGKFTN), 254 to 274 (RDQQQPLSQPLPPPPQQQQDL), and 355 to 396 (REGR…LNST). Polar residues-rich tracts occupy residues 111–124 (QPHNNTEGTQSSEN), 159–168 (ASSSTGGISH), and 210–230 (GTKSQESPLNKKPTSLHSRNL). The segment covering 355 to 369 (REGRQVHDDLDDRTC) has biased composition (basic and acidic residues). Residues 370-396 (SESSSRNESPVRTITKDNSVGKILNST) show a composition bias toward polar residues.

It localises to the cytoplasm. The protein localises to the nucleus. Its function is as follows. Involved in resistance to methylmercury. Overexpression suppresses a PAM1-SLV3 double null mutation. This chain is Protein BOP3 (BOP3), found in Saccharomyces cerevisiae (strain ATCC 204508 / S288c) (Baker's yeast).